Consider the following 498-residue polypeptide: ATP synthase subunit beta, chloroplastic (498 aa).

Threonine 6 is subject to Phosphothreonine. Serine 13 is subject to Phosphoserine. Glycine 172–threonine 179 lines the ATP pocket.

Belongs to the ATPase alpha/beta chains family. As to quaternary structure, F-type ATPases have 2 components, CF(1) - the catalytic core - and CF(0) - the membrane proton channel. CF(1) has five subunits: alpha(3), beta(3), gamma(1), delta(1), epsilon(1). CF(0) has four main subunits: a(1), b(1), b'(1) and c(9-12).

The protein resides in the plastid. It is found in the chloroplast thylakoid membrane. The catalysed reaction is ATP + H2O + 4 H(+)(in) = ADP + phosphate + 5 H(+)(out). In terms of biological role, produces ATP from ADP in the presence of a proton gradient across the membrane. The catalytic sites are hosted primarily by the beta subunits. The sequence is that of ATP synthase subunit beta, chloroplastic from Arabis hirsuta (Hairy rock-cress).